Consider the following 461-residue polypeptide: GTPase Era, mitochondrial (461 aa).

A mitochondrion-targeting transit peptide spans 1 to 35; that stretch reads MAAPWLQRWRGAYAGPSGPLRLVRLHGVQRSSWRA. Positions 39–73 are disordered; sequence AAGAFGAGPHPGPPQRAANPGPGPHPPPVATSREK. The region spanning 89–354 is the Era-type G domain; sequence KVLRISIIGA…QYLLMQAKPG (266 aa). Residues 97 to 104 form a G1 region; the sequence is GAPNSGKS. 97-104 lines the GTP pocket; that stretch reads GAPNSGKS. The G2 stretch occupies residues 123–127; it reads HTTRC. A G3 region spans residues 144 to 147; that stretch reads DTPG. Residues 144-148 and 213-216 contribute to the GTP site; these read DTPGL and NKVD. The interval 213-216 is G4; it reads NKVD. Positions 260-319 are disordered; sequence KVTQTPPPENRARESPCQLETDKAQEGSSLDNSSDVKASESSLDTEAREQKPYKYGDQKN. A compositionally biased stretch (basic and acidic residues) spans 269–284; that stretch reads NRARESPCQLETDKAQ. Residues 285–303 show a composition bias toward polar residues; sequence EGSSLDNSSDVKASESSLD. Over residues 304–319 the composition is skewed to basic and acidic residues; that stretch reads TEAREQKPYKYGDQKN. Residues 332–334 are G5; that stretch reads LAA. Positions 380–461 constitute a KH type-2 domain; the sequence is ILEYLPLEVP…RLKLKVEVKS (82 aa).

This sequence belongs to the TRAFAC class TrmE-Era-EngA-EngB-Septin-like GTPase superfamily. Era GTPase family.

It localises to the mitochondrion matrix. The protein localises to the mitochondrion inner membrane. Its function is as follows. Probable GTPase that plays a role in the mitochondrial ribosomal small subunit assembly. Specifically binds the 12S mitochondrial rRNA (12S mt-rRNA) to a 33 nucleotide section delineating the 3' terminal stem-loop region. May act as a chaperone that protects the 12S mt-rRNA on the 28S mitoribosomal subunit during ribosomal small subunit assembly. The protein is GTPase Era, mitochondrial (ERAL1) of Gallus gallus (Chicken).